We begin with the raw amino-acid sequence, 204 residues long: Guanylate kinase (204 aa).

The Guanylate kinase-like domain maps to 5–184 (GLLLVLSGPS…AVNHIKAIVD (180 aa)). 12 to 19 (GPSGVGKG) contributes to the ATP binding site.

It belongs to the guanylate kinase family.

Its subcellular location is the cytoplasm. It catalyses the reaction GMP + ATP = GDP + ADP. Functionally, essential for recycling GMP and indirectly, cGMP. The sequence is that of Guanylate kinase from Lactobacillus delbrueckii subsp. bulgaricus (strain ATCC 11842 / DSM 20081 / BCRC 10696 / JCM 1002 / NBRC 13953 / NCIMB 11778 / NCTC 12712 / WDCM 00102 / Lb 14).